A 290-amino-acid chain; its full sequence is Ribonuclease HIII (290 aa).

One can recognise an RNase H type-2 domain in the interval 78–290 (LPLIGTDEVG…FKNTEKAKNA (213 aa)). Aspartate 84, glutamate 85, and aspartate 187 together coordinate a divalent metal cation.

It belongs to the RNase HII family. RnhC subfamily. Mn(2+) serves as cofactor. Requires Mg(2+) as cofactor.

The protein localises to the cytoplasm. It carries out the reaction Endonucleolytic cleavage to 5'-phosphomonoester.. Functionally, endonuclease that specifically degrades the RNA of RNA-DNA hybrids. The protein is Ribonuclease HIII of Streptococcus pneumoniae (strain P1031).